We begin with the raw amino-acid sequence, 89 residues long: Large ribosomal subunit protein uL24 (89 aa).

The protein belongs to the universal ribosomal protein uL24 family. As to quaternary structure, part of the 50S ribosomal subunit.

Its function is as follows. One of two assembly initiator proteins, it binds directly to the 5'-end of the 23S rRNA, where it nucleates assembly of the 50S subunit. In terms of biological role, one of the proteins that surrounds the polypeptide exit tunnel on the outside of the subunit. The chain is Large ribosomal subunit protein uL24 from Chlorobium chlorochromatii (strain CaD3).